The following is a 282-amino-acid chain: NADPH-dependent 7-cyano-7-deazaguanine reductase (282 aa).

88–90 (IES) contacts substrate. 90–91 (SK) contributes to the NADPH binding site. Cys-190 (thioimide intermediate) is an active-site residue. The active-site Proton donor is the Asp-197. 229 to 230 (HE) lines the substrate pocket. Position 258-259 (258-259 (RG)) interacts with NADPH.

This sequence belongs to the GTP cyclohydrolase I family. QueF type 2 subfamily. In terms of assembly, homodimer.

The protein resides in the cytoplasm. It catalyses the reaction 7-aminomethyl-7-carbaguanine + 2 NADP(+) = 7-cyano-7-deazaguanine + 2 NADPH + 3 H(+). It participates in tRNA modification; tRNA-queuosine biosynthesis. Its function is as follows. Catalyzes the NADPH-dependent reduction of 7-cyano-7-deazaguanine (preQ0) to 7-aminomethyl-7-deazaguanine (preQ1). This chain is NADPH-dependent 7-cyano-7-deazaguanine reductase, found in Salmonella schwarzengrund (strain CVM19633).